Reading from the N-terminus, the 430-residue chain is 5-methylthioadenosine/S-adenosylhomocysteine deaminase (430 aa).

Zn(2+) is bound by residues His-59 and His-61. Substrate contacts are provided by Glu-88 and His-181. His-208 is a Zn(2+) binding site. Residues Glu-211 and Asp-296 each contribute to the substrate site. Asp-296 contributes to the Zn(2+) binding site.

It belongs to the metallo-dependent hydrolases superfamily. MTA/SAH deaminase family. Zn(2+) is required as a cofactor.

The catalysed reaction is S-adenosyl-L-homocysteine + H2O + H(+) = S-inosyl-L-homocysteine + NH4(+). It carries out the reaction S-methyl-5'-thioadenosine + H2O + H(+) = S-methyl-5'-thioinosine + NH4(+). Functionally, catalyzes the deamination of 5-methylthioadenosine and S-adenosyl-L-homocysteine into 5-methylthioinosine and S-inosyl-L-homocysteine, respectively. Is also able to deaminate adenosine. The sequence is that of 5-methylthioadenosine/S-adenosylhomocysteine deaminase from Aquifex aeolicus (strain VF5).